The chain runs to 33 residues: Tail virion protein G7P (33 aa).

Residues 10-30 traverse the membrane as a helical segment; that stretch reads IYQAMIQISVVLCFALGIIAG.

The protein belongs to the inovirus G7P protein family.

It is found in the virion. The protein resides in the host membrane. May initiate with G9P the virion concomitant assembly-budding process, by interacting with the packaging signal of the viral genome. The assembly-budding takes place at the host inner membrane. In turn, G7P and G9P are present at the end of the filamentous virion that emerges first from the bacterial host. The protein is Tail virion protein G7P (VII) of Escherichia coli (Bacteriophage f1).